Reading from the N-terminus, the 161-residue chain is MDKEVEVPPAGDSPTCIEAIDVMRIMEAIPHRYPFLLIDRMVDIVLGSSAVGIKNVTASEPHFQGHFPARPVMPGVLIIEAMAQTAATLVVLTLGPAFEGKLVYFMTIDGAKFRRPVGPGDQLRIHVEKERSRANVWKFKGIARVDGVSVAEATFSAMIMG.

His-66 is a catalytic residue.

The protein belongs to the thioester dehydratase family. FabZ subfamily.

It is found in the cytoplasm. The catalysed reaction is a (3R)-hydroxyacyl-[ACP] = a (2E)-enoyl-[ACP] + H2O. Involved in unsaturated fatty acids biosynthesis. Catalyzes the dehydration of short chain beta-hydroxyacyl-ACPs and long chain saturated and unsaturated beta-hydroxyacyl-ACPs. This chain is 3-hydroxyacyl-[acyl-carrier-protein] dehydratase FabZ, found in Gluconacetobacter diazotrophicus (strain ATCC 49037 / DSM 5601 / CCUG 37298 / CIP 103539 / LMG 7603 / PAl5).